Reading from the N-terminus, the 312-residue chain is Ribosomal protein L11 methyltransferase (312 aa).

The S-adenosyl-L-methionine site is built by T162, G183, D205, and N248.

The protein belongs to the methyltransferase superfamily. PrmA family.

The protein resides in the cytoplasm. The catalysed reaction is L-lysyl-[protein] + 3 S-adenosyl-L-methionine = N(6),N(6),N(6)-trimethyl-L-lysyl-[protein] + 3 S-adenosyl-L-homocysteine + 3 H(+). Functionally, methylates ribosomal protein L11. The chain is Ribosomal protein L11 methyltransferase from Bacillus cereus (strain ATCC 10987 / NRS 248).